The following is a 296-amino-acid chain: Small ribosomal subunit biogenesis GTPase RsgA (296 aa).

The 162-residue stretch at Lys-63 to Tyr-224 folds into the CP-type G domain. GTP-binding positions include Ser-112–Asp-115 and Gly-167–Thr-175. Residues Cys-248, Cys-253, His-255, and Cys-261 each coordinate Zn(2+).

This sequence belongs to the TRAFAC class YlqF/YawG GTPase family. RsgA subfamily. Monomer. Associates with 30S ribosomal subunit, binds 16S rRNA. Zn(2+) is required as a cofactor.

The protein localises to the cytoplasm. In terms of biological role, one of several proteins that assist in the late maturation steps of the functional core of the 30S ribosomal subunit. Helps release RbfA from mature subunits. May play a role in the assembly of ribosomal proteins into the subunit. Circularly permuted GTPase that catalyzes slow GTP hydrolysis, GTPase activity is stimulated by the 30S ribosomal subunit. This chain is Small ribosomal subunit biogenesis GTPase RsgA, found in Limosilactobacillus fermentum (strain NBRC 3956 / LMG 18251) (Lactobacillus fermentum).